Here is an 811-residue protein sequence, read N- to C-terminus: TLR4 interactor with leucine rich repeats (811 aa).

A signal peptide spans 1–25; sequence MEAARALRLLLVVCGCLALPPLAEP. Positions 26–57 constitute an LRRNT domain; that stretch reads VCPERCDCQHPQHLLCTNRGLRVVPKTSSLPS. Topologically, residues 26 to 696 are extracellular; that stretch reads VCPERCDCQH…AGSRGGVDYQ (671 aa). LRR repeat units lie at residues 61–81, 84–105, 108–129, 132–153, 156–177, 180–201, 204–223, 230–251, 254–275, 278–299, 302–323, and 326–347; these read VLTYSLGGNFITNITAFDFHR, QLRRLDLQYNQIRSLHPKTFEK, RLEELYLGNNLLQALAPGTLAP, KLRILYANGNEISRLSRGSFEG, SLVKLRLDGNALGALPDAVFAP, NLLYLHLESNRIRFLGKNAFAQ, KLRFLNLSANELQPSLRHAA, SLSSLILSANNLQHLGPRIFQH, RLGLLSLRGNQLTHLAPEAFWG, ALRELRLEGNRLSQLPTALLEP, SLEALDLSGNELSALHPATFGH, and RLRELSLRNNALSALSGDIFAA. N-linked (GlcNAc...) asparagine glycosylation occurs at Asn-73. Asn-209 is a glycosylation site (N-linked (GlcNAc...) asparagine). Residues 359–416 form the LRRCT domain; sequence NGWTCDCRLRGLKRWMGDWHSQGRLLTVFVQCRHPPALRGKYLDYLDDQQLQNGSCAD. The interval 484–549 is disordered; sequence LSRRGPGLQQ…PSPAGDPWQR (66 aa). Low complexity-rich tracts occupy residues 492–508 and 530–544; these read QQPSPSVAAAAGPAPQS and PTPTASPGSAPSPAG. Asn-589 carries N-linked (GlcNAc...) asparagine glycosylation. Residues 697-717 form a helical membrane-spanning segment; that stretch reads LLTLALLTVNALLVLLALAAW. At 718 to 811 the chain is on the cytoplasmic side; that stretch reads ASRWLRRKLR…EDRLLQRFAD (94 aa). Position 798 is a phosphoserine (Ser-798).

In terms of assembly, belongs to the lipopolysaccharide (LPS) receptor, a multi-protein complex containing at least CD14, MD-2 and TLR4. Interacts with TLR4; this interaction is greatly enhanced by LPS stimulation. Interacts with LPS. Post-translationally, N-glycolysaled. In terms of tissue distribution, highly expressed in the brain, ovary, small intestine and spleen.

The protein localises to the membrane. Component of the TLR4 signaling complex. Mediates the innate immune response to bacterial lipopolysaccharide (LPS) leading to cytokine secretion. The polypeptide is TLR4 interactor with leucine rich repeats (TRIL) (Homo sapiens (Human)).